The primary structure comprises 123 residues: Large ribosomal subunit protein bL21 (123 aa).

The protein belongs to the bacterial ribosomal protein bL21 family. Part of the 50S ribosomal subunit. Contacts protein L20.

This protein binds to 23S rRNA in the presence of protein L20. This is Large ribosomal subunit protein bL21 from Rippkaea orientalis (strain PCC 8801 / RF-1) (Cyanothece sp. (strain PCC 8801)).